Consider the following 348-residue polypeptide: Phosphate acyltransferase (348 aa).

It belongs to the PlsX family. In terms of assembly, homodimer. Probably interacts with PlsY.

It is found in the cytoplasm. It catalyses the reaction a fatty acyl-[ACP] + phosphate = an acyl phosphate + holo-[ACP]. The protein operates within lipid metabolism; phospholipid metabolism. In terms of biological role, catalyzes the reversible formation of acyl-phosphate (acyl-PO(4)) from acyl-[acyl-carrier-protein] (acyl-ACP). This enzyme utilizes acyl-ACP as fatty acyl donor, but not acyl-CoA. The chain is Phosphate acyltransferase from Nitrosomonas europaea (strain ATCC 19718 / CIP 103999 / KCTC 2705 / NBRC 14298).